The following is a 476-amino-acid chain: MEPLAILALLSLPICSAYPLHGAVTQGHPSMDLAQQYLEKYYNFKKNEKQIFKRKDSSPVVKKIQEMQKFLGLEMTGKLDSNTMELMHKPRCGVPDVGGFSTFPGSPKWRKSHITYRIVNYTPDLPRQSVDSAIEKALKVWEEVTPLTFSRISEGEADIMISFAVGEHGDFYPFDGPGQSLAHAYPPGPGFYGDVHFDDDEKWTLAPSGTNLFLVAAHELGHSLGLFHSDKKESLMYPVYRFSTSPANFHLSQDDIEGIQSLYGAGPSSDATVVPVLSVSPRPETPDKCDPALSFDSVSTLRGEVLFFKDRYFWRRSHWNPEPEFHLISAFWPTLPSDLDAAYEAHNTDSVLIFKGSQFWAVRGNEVQAGYPKGIHTLGFPPTVKKIDAAVFEKEKKKTYFFVGDKYWRFDETRHVMDKGFPRQITDDFPGIEPQVDAVLHEFGFFYFFRGSSQFEFDPNARTVTHILKSNSWLLC.

A signal peptide spans 1–17 (MEPLAILALLSLPICSA). Residues 18-99 (YPLHGAVTQG…PRCGVPDVGG (82 aa)) constitute a propeptide, activation peptide. The Cysteine switch signature appears at 90–97 (PRCGVPDV). Zn(2+) is bound by residues C92, H168, D170, H183, H196, and H218. E219 is an active-site residue. Zn(2+) is bound by residues H222 and H228. Hemopexin repeat units lie at residues 286-335 (PDKC…WPTL), 336-382 (PSDL…GFPP), 384-432 (VKKI…FPGI), and 433-476 (EPQV…WLLC). A disulfide bond links C289 and C476.

It belongs to the peptidase M10A family. The cofactor is Zn(2+). Ca(2+) is required as a cofactor. In terms of tissue distribution, expressed in small intestine. Weak levels in heart and lung.

It localises to the secreted. Its subcellular location is the extracellular space. It is found in the extracellular matrix. The catalysed reaction is Similar to stromelysin 1, but action on collagen types III, IV and V is weak.. Can degrade fibronectin, gelatins of type I, III, IV, and V; weakly collagens III, IV, and V. Activates procollagenase. The chain is Stromelysin-2 (Mmp10) from Mus musculus (Mouse).